The chain runs to 194 residues: GTP cyclohydrolase 1 (194 aa).

Zn(2+) contacts are provided by Cys-85, His-88, and Cys-156.

The protein belongs to the GTP cyclohydrolase I family. Toroid-shaped homodecamer, composed of two pentamers of five dimers.

It carries out the reaction GTP + H2O = 7,8-dihydroneopterin 3'-triphosphate + formate + H(+). It functions in the pathway cofactor biosynthesis; 7,8-dihydroneopterin triphosphate biosynthesis; 7,8-dihydroneopterin triphosphate from GTP: step 1/1. The chain is GTP cyclohydrolase 1 from Bacteroides fragilis (strain YCH46).